The chain runs to 244 residues: Methanethiol S-methyltransferase (244 aa).

5 helical membrane passes run 7–27 (IIYGAASYLVFLVAFGYAIGF), 41–61 (IAAPIGQAVVVNLVLLGVFAV), 90–110 (LLASVALLLLYWQWRTMPAVI), 120–140 (VALWALFWLGWATVLTSTFMI), and 181–201 (GFVVAFWATPMMTAGHLLFAI).

This sequence belongs to the nurim family.

The protein resides in the membrane. It catalyses the reaction methanethiol + S-adenosyl-L-methionine = dimethyl sulfide + S-adenosyl-L-homocysteine + H(+). Catalyzes the methylation of methanethiol (MeSH) to yield dimethylsulphide (DMS). The protein is Methanethiol S-methyltransferase of Mycobacterium tuberculosis (strain ATCC 25618 / H37Rv).